The sequence spans 60 residues: UPF0181 protein PMI1604 (60 aa).

This sequence belongs to the UPF0181 family.

The sequence is that of UPF0181 protein PMI1604 from Proteus mirabilis (strain HI4320).